The following is a 328-amino-acid chain: Phenylalanine--tRNA ligase alpha subunit (328 aa).

Position 245 (Glu245) interacts with Mg(2+).

This sequence belongs to the class-II aminoacyl-tRNA synthetase family. Phe-tRNA synthetase alpha subunit type 1 subfamily. As to quaternary structure, tetramer of two alpha and two beta subunits. Mg(2+) is required as a cofactor.

It localises to the cytoplasm. The enzyme catalyses tRNA(Phe) + L-phenylalanine + ATP = L-phenylalanyl-tRNA(Phe) + AMP + diphosphate + H(+). The polypeptide is Phenylalanine--tRNA ligase alpha subunit (pheS) (Helicobacter pylori (strain ATCC 700392 / 26695) (Campylobacter pylori)).